Here is a 138-residue protein sequence, read N- to C-terminus: Cofilin (138 aa).

The 135-residue stretch at 2–136 (SSGVQPTQEC…TKDALFEKAT (135 aa)) folds into the ADF-H domain.

It belongs to the actin-binding proteins ADF family.

The protein localises to the cytoplasm. It localises to the cytoskeleton. Its subcellular location is the nucleus matrix. Its function is as follows. Controls reversibly actin polymerization and depolymerization in a pH-sensitive manner. It has the ability to bind G- and F-actin in a 1:1 ratio of cofilin to actin. Binding to F-actin is regulated by tropomyosin. It is the major component of intranuclear and cytoplasmic actin rods. Required for accumulation of actin at the cell division site via depolymerizing actin at the cell ends. In association with myosin II has a role in the assembly of the contractile ring via severing actin filaments. Involved in the maintenance of the contractile ring once formed. In association with profilin and capping protein, has a role in the mitotic reorganization of the actin cytoskeleton. This chain is Cofilin (COF1), found in Cryptococcus neoformans var. neoformans serotype D (strain B-3501A) (Filobasidiella neoformans).